We begin with the raw amino-acid sequence, 236 residues long: 2,3,4,5-tetrahydropyridine-2,6-dicarboxylate N-acetyltransferase (236 aa).

The protein belongs to the transferase hexapeptide repeat family. DapH subfamily.

The catalysed reaction is (S)-2,3,4,5-tetrahydrodipicolinate + acetyl-CoA + H2O = L-2-acetamido-6-oxoheptanedioate + CoA. The protein operates within amino-acid biosynthesis; L-lysine biosynthesis via DAP pathway; LL-2,6-diaminopimelate from (S)-tetrahydrodipicolinate (acetylase route): step 1/3. Its function is as follows. Catalyzes the transfer of an acetyl group from acetyl-CoA to tetrahydrodipicolinate. In Clostridium botulinum (strain ATCC 19397 / Type A), this protein is 2,3,4,5-tetrahydropyridine-2,6-dicarboxylate N-acetyltransferase.